The chain runs to 271 residues: uncharacterized protein (271 aa).

The first 18 residues, 1-18 (MKGFFLIAGFLLFARALC), serve as a signal peptide directing secretion. At 19-187 (ASWNVEEGTL…FSPPPKRANY (169 aa)) the chain is on the lumenal side. Residues 188 to 208 (FLSICFSVSVVVSLIGLLGVW) form a helical membrane-spanning segment. Residues 209–230 (QKLLPKSNVYSVSSSSFARTFG) lie on the Cytoplasmic side of the membrane. Residues 231-251 (FASLAVAEILLFIYWTSLSIF) traverse the membrane as a helical segment. Residues 252–271 (QFGAYAAGVAIMCGIAAKSL) lie on the Lumenal side of the membrane.

It is found in the endoplasmic reticulum membrane. This is an uncharacterized protein from Schizosaccharomyces pombe (strain 972 / ATCC 24843) (Fission yeast).